The chain runs to 203 residues: Glycerol-3-phosphate acyltransferase (203 aa).

The next 6 helical transmembrane spans lie at 3-23 (ILLA…VVVS), 51-71 (KAAI…VWLV), 74-94 (FGIG…LGHL), 116-136 (AVHP…AFFF), 140-160 (SLAA…LFGT), and 164-178 (PVAW…LLIW).

Belongs to the PlsY family. Probably interacts with PlsX.

It localises to the cell inner membrane. The enzyme catalyses an acyl phosphate + sn-glycerol 3-phosphate = a 1-acyl-sn-glycero-3-phosphate + phosphate. Its pathway is lipid metabolism; phospholipid metabolism. Functionally, catalyzes the transfer of an acyl group from acyl-phosphate (acyl-PO(4)) to glycerol-3-phosphate (G3P) to form lysophosphatidic acid (LPA). This enzyme utilizes acyl-phosphate as fatty acyl donor, but not acyl-CoA or acyl-ACP. The polypeptide is Glycerol-3-phosphate acyltransferase (Burkholderia pseudomallei (strain 1710b)).